A 217-amino-acid chain; its full sequence is ATP phosphoribosyltransferase (217 aa).

It belongs to the ATP phosphoribosyltransferase family. Short subfamily. Heteromultimer composed of HisG and HisZ subunits.

It localises to the cytoplasm. The enzyme catalyses 1-(5-phospho-beta-D-ribosyl)-ATP + diphosphate = 5-phospho-alpha-D-ribose 1-diphosphate + ATP. Its pathway is amino-acid biosynthesis; L-histidine biosynthesis; L-histidine from 5-phospho-alpha-D-ribose 1-diphosphate: step 1/9. In terms of biological role, catalyzes the condensation of ATP and 5-phosphoribose 1-diphosphate to form N'-(5'-phosphoribosyl)-ATP (PR-ATP). Has a crucial role in the pathway because the rate of histidine biosynthesis seems to be controlled primarily by regulation of HisG enzymatic activity. This Burkholderia orbicola (strain AU 1054) protein is ATP phosphoribosyltransferase.